Reading from the N-terminus, the 492-residue chain is uncharacterized protein (492 aa).

13 consecutive transmembrane segments (helical) span residues 67-87 (VAIM…GGWL), 88-108 (ADRV…IMFG), 110-130 (IALA…LIIV), 157-177 (GFSI…LIVG), 185-205 (YHLG…VFAL), 232-252 (IGVI…VLTI), 255-275 (FIDL…IIMF), 294-314 (LFIG…ILAV), 333-353 (WFQS…AWLW), 367-387 (FSIG…PAMQ), 392-412 (LVSP…ELCL), 434-454 (SMWF…AGLF), and 464-484 (GTIG…SPVI).

Belongs to the major facilitator superfamily. Proton-dependent oligopeptide transporter (POT/PTR) (TC 2.A.17) family.

The protein resides in the cell membrane. This is an uncharacterized protein from Bacillus subtilis (strain 168).